Reading from the N-terminus, the 203-residue chain is Shikimate kinase (203 aa).

ATP is bound at residue 38 to 43 (GAGKST). Ser-42 serves as a coordination point for Mg(2+). The substrate site is built by Asp-60, Arg-84, and Gly-106. Arg-144 serves as a coordination point for ATP. Arg-163 contributes to the substrate binding site.

It belongs to the shikimate kinase family. Monomer. It depends on Mg(2+) as a cofactor.

Its subcellular location is the cytoplasm. It catalyses the reaction shikimate + ATP = 3-phosphoshikimate + ADP + H(+). It participates in metabolic intermediate biosynthesis; chorismate biosynthesis; chorismate from D-erythrose 4-phosphate and phosphoenolpyruvate: step 5/7. In terms of biological role, catalyzes the specific phosphorylation of the 3-hydroxyl group of shikimic acid using ATP as a cosubstrate. In Rhodopseudomonas palustris (strain ATCC BAA-98 / CGA009), this protein is Shikimate kinase.